Reading from the N-terminus, the 584-residue chain is uncharacterized protein (584 aa).

PbH1 repeat units lie at residues 100-128 (QENI…RSTH), 139-161 (CSNV…IVSP), 173-195 (SEQI…SITG), 196-225 (CDMV…DIEG), 236-266 (PINV…LIEG), 313-333 (TSDA…IDVR), 334-356 (GKSV…LVYQ), 357-382 (SSDV…GLRA), 406-427 (GGNM…WIAQ), 456-478 (NAGA…YCST), and 529-554 (SAGS…QTNT).

This is an uncharacterized protein from Bacillus subtilis (strain 168).